Reading from the N-terminus, the 125-residue chain is MRPLDAVELAEPEEVEVLEPEEDFEQFLLPVIHEMREDIASLTRERGRAPVRNRGKLWEMDNMLIQIKTQVEASEESALNHLQGAGGAEPRGPRAEKADEKAQEMAKMAEMLVQLVRRIEKSESS.

The disordered stretch occupies residues 76–99 (ESALNHLQGAGGAEPRGPRAEKAD). The stretch at 94–124 (RAEKADEKAQEMAKMAEMLVQLVRRIEKSES) forms a coiled coil.

The protein belongs to the MORF4 family-associated protein family. In terms of assembly, found in a complex composed of MORF4L1, MRFAP1 and RB1. Interacts via its N-terminus with MORF4L1. Interacts with CSTB and MORF4L2.

The protein localises to the nucleus. It is found in the cytoplasm. It localises to the perinuclear region. This is MORF4 family-associated protein 1 from Rattus norvegicus (Rat).